A 628-amino-acid chain; its full sequence is Phosphomethylpyrimidine synthase (628 aa).

Substrate-binding positions include N225, M254, Y283, H319, 339 to 341, 380 to 383, and E419; these read SRG and DGLR. H423 contacts Zn(2+). A substrate-binding site is contributed by Y446. A Zn(2+)-binding site is contributed by H487. C567, C570, and C575 together coordinate [4Fe-4S] cluster.

Belongs to the ThiC family. As to quaternary structure, homodimer. [4Fe-4S] cluster is required as a cofactor.

The catalysed reaction is 5-amino-1-(5-phospho-beta-D-ribosyl)imidazole + S-adenosyl-L-methionine = 4-amino-2-methyl-5-(phosphooxymethyl)pyrimidine + CO + 5'-deoxyadenosine + formate + L-methionine + 3 H(+). The protein operates within cofactor biosynthesis; thiamine diphosphate biosynthesis. Its function is as follows. Catalyzes the synthesis of the hydroxymethylpyrimidine phosphate (HMP-P) moiety of thiamine from aminoimidazole ribotide (AIR) in a radical S-adenosyl-L-methionine (SAM)-dependent reaction. This is Phosphomethylpyrimidine synthase from Leptothrix cholodnii (strain ATCC 51168 / LMG 8142 / SP-6) (Leptothrix discophora (strain SP-6)).